Here is a 202-residue protein sequence, read N- to C-terminus: LexA repressor 2 (202 aa).

The H-T-H motif DNA-binding region spans 28–48; it reads LADIATRFGFASRSVARKHIT. Catalysis depends on for autocatalytic cleavage activity residues Ser-123 and Lys-160.

It belongs to the peptidase S24 family. Homodimer.

The enzyme catalyses Hydrolysis of Ala-|-Gly bond in repressor LexA.. Represses a number of genes involved in the response to DNA damage (SOS response), including recA and lexA. In the presence of single-stranded DNA, RecA interacts with LexA causing an autocatalytic cleavage which disrupts the DNA-binding part of LexA, leading to derepression of the SOS regulon and eventually DNA repair. The protein is LexA repressor 2 of Pseudomonas putida (strain ATCC 47054 / DSM 6125 / CFBP 8728 / NCIMB 11950 / KT2440).